The following is a 434-amino-acid chain: Ribosomal protein uS12 methylthiotransferase RimO (434 aa).

Residues 4–122 form the MTTase N-terminal domain; the sequence is NRVDVITLGC…LISHLGKSYY (119 aa). Residues Cys-13, Cys-51, Cys-85, Cys-146, Cys-150, and Cys-153 each coordinate [4Fe-4S] cluster. The 232-residue stretch at 132–363 folds into the Radical SAM core domain; the sequence is TTPRHYAYLK…MAVQERISAA (232 aa). One can recognise a TRAM domain in the interval 366–434; the sequence is EAKIGSRLHV…PFDLYARIVD (69 aa).

This sequence belongs to the methylthiotransferase family. RimO subfamily. It depends on [4Fe-4S] cluster as a cofactor.

Its subcellular location is the cytoplasm. It carries out the reaction L-aspartate(89)-[ribosomal protein uS12]-hydrogen + (sulfur carrier)-SH + AH2 + 2 S-adenosyl-L-methionine = 3-methylsulfanyl-L-aspartate(89)-[ribosomal protein uS12]-hydrogen + (sulfur carrier)-H + 5'-deoxyadenosine + L-methionine + A + S-adenosyl-L-homocysteine + 2 H(+). In terms of biological role, catalyzes the methylthiolation of an aspartic acid residue of ribosomal protein uS12. This Porphyromonas gingivalis (strain ATCC BAA-308 / W83) protein is Ribosomal protein uS12 methylthiotransferase RimO.